We begin with the raw amino-acid sequence, 75 residues long: Small ribosomal subunit protein bS18 (75 aa).

It belongs to the bacterial ribosomal protein bS18 family. Part of the 30S ribosomal subunit. Forms a tight heterodimer with protein bS6.

In terms of biological role, binds as a heterodimer with protein bS6 to the central domain of the 16S rRNA, where it helps stabilize the platform of the 30S subunit. The chain is Small ribosomal subunit protein bS18 from Laribacter hongkongensis (strain HLHK9).